The chain runs to 116 residues: Iron-sulfur cluster assembly protein CyaY (116 aa).

It belongs to the frataxin family.

In terms of biological role, involved in iron-sulfur (Fe-S) cluster assembly. May act as a regulator of Fe-S biogenesis. In Polaromonas sp. (strain JS666 / ATCC BAA-500), this protein is Iron-sulfur cluster assembly protein CyaY.